Here is an 86-residue protein sequence, read N- to C-terminus: UPF0367 protein PMN2A_1492 (86 aa).

This sequence belongs to the UPF0367 family.

This chain is UPF0367 protein PMN2A_1492, found in Prochlorococcus marinus (strain NATL2A).